The primary structure comprises 110 residues: UPF0060 membrane protein BTH_I2792 (110 aa).

4 helical membrane passes run 9-29 (ALFV…WLVL), 34-54 (PVWL…LLTL), 64-84 (AAYG…VDGV), and 86-106 (LSRW…VIAL).

Belongs to the UPF0060 family.

The protein resides in the cell inner membrane. The chain is UPF0060 membrane protein BTH_I2792 from Burkholderia thailandensis (strain ATCC 700388 / DSM 13276 / CCUG 48851 / CIP 106301 / E264).